We begin with the raw amino-acid sequence, 304 residues long: ATP synthase gamma chain (304 aa).

Belongs to the ATPase gamma chain family. F-type ATPases have 2 components, CF(1) - the catalytic core - and CF(0) - the membrane proton channel. CF(1) has five subunits: alpha(3), beta(3), gamma(1), delta(1), epsilon(1). CF(0) has three main subunits: a, b and c.

It is found in the cell membrane. Functionally, produces ATP from ADP in the presence of a proton gradient across the membrane. The gamma chain is believed to be important in regulating ATPase activity and the flow of protons through the CF(0) complex. The sequence is that of ATP synthase gamma chain from Mycobacterium ulcerans (strain Agy99).